The primary structure comprises 107 residues: Benzene 1,2-dioxygenase system ferredoxin subunit (107 aa).

In terms of domain architecture, Rieske spans 4 to 99; the sequence is TYILRQSDLP…IKVEGDEVHV (96 aa). [2Fe-2S] cluster contacts are provided by cysteine 43, histidine 45, cysteine 62, and histidine 65.

The protein belongs to the bacterial ring-hydroxylating dioxygenase ferredoxin component family. This dioxygenase system consists of four proteins: the two subunits of the hydroxylase component (BnzA and BnzB), a ferredoxin (BnzC) and a ferredoxin reductase (BnzD).

It functions in the pathway aromatic compound metabolism; benzene degradation; catechol from benzene: step 1/2. Functionally, this protein seems to be a 2Fe-2S ferredoxin. In Pseudomonas putida (Arthrobacter siderocapsulatus), this protein is Benzene 1,2-dioxygenase system ferredoxin subunit (bnzC).